The primary structure comprises 278 residues: 4-deoxy-L-threo-5-hexosulose-uronate ketol-isomerase (278 aa).

Histidine 196, histidine 198, glutamate 203, and histidine 245 together coordinate Zn(2+).

It belongs to the KduI family. Homohexamer. Zn(2+) serves as cofactor.

The catalysed reaction is 5-dehydro-4-deoxy-D-glucuronate = 3-deoxy-D-glycero-2,5-hexodiulosonate. It functions in the pathway glycan metabolism; pectin degradation; 2-dehydro-3-deoxy-D-gluconate from pectin: step 4/5. Its function is as follows. Catalyzes the isomerization of 5-dehydro-4-deoxy-D-glucuronate to 3-deoxy-D-glycero-2,5-hexodiulosonate. In Escherichia coli (strain SMS-3-5 / SECEC), this protein is 4-deoxy-L-threo-5-hexosulose-uronate ketol-isomerase.